A 27-amino-acid chain; its full sequence is Trypsin inhibitor 5 (27 aa).

3 disulfide bridges follow: Cys-1–Cys-18, Cys-8–Cys-20, and Cys-14–Cys-26.

The protein localises to the secreted. Inhibits trypsin. The polypeptide is Trypsin inhibitor 5 (Sechium edule (Chayote)).